Reading from the N-terminus, the 299-residue chain is Oxygen-dependent coproporphyrinogen-III oxidase (299 aa).

Ser92 provides a ligand contact to substrate. Mn(2+)-binding residues include His96 and His106. His106 acts as the Proton donor in catalysis. Substrate is bound at residue 108 to 110; the sequence is NVR. Mn(2+) contacts are provided by His145 and His175. The interval 240-275 is important for dimerization; sequence YVEFNLVWDRGTLFGLQTGGRTESILMSMPPLVRWE. 258-260 is a binding site for substrate; sequence GGR.

It belongs to the aerobic coproporphyrinogen-III oxidase family. As to quaternary structure, homodimer. Mn(2+) is required as a cofactor.

Its subcellular location is the cytoplasm. It catalyses the reaction coproporphyrinogen III + O2 + 2 H(+) = protoporphyrinogen IX + 2 CO2 + 2 H2O. It functions in the pathway porphyrin-containing compound metabolism; protoporphyrin-IX biosynthesis; protoporphyrinogen-IX from coproporphyrinogen-III (O2 route): step 1/1. Functionally, involved in the heme biosynthesis. Catalyzes the aerobic oxidative decarboxylation of propionate groups of rings A and B of coproporphyrinogen-III to yield the vinyl groups in protoporphyrinogen-IX. In Escherichia coli O8 (strain IAI1), this protein is Oxygen-dependent coproporphyrinogen-III oxidase.